Reading from the N-terminus, the 663-residue chain is Epithelial sodium channel subunit gamma-2 (663 aa).

Topologically, residues 1–55 (MSNSGKKLTQKLKKNLPVTGPQAPTLYELMQWYCLNTNTHGCRRIVVSKGRLRRW) are cytoplasmic. A helical transmembrane segment spans residues 56-76 (IWIVLTLIAVALIFWQCALLL). Over 77-544 (MTYYSVSASI…GGQLGLWMSC (468 aa)) the chain is Extracellular. Disulfide bonds link C101/C286, C209/C217, C263/C270, C375/C460, C397/C456, C401/C452, C410/C437, and C412/C426. A helical membrane pass occupies residues 545–565 (SMVCGLEIVEVFFIDSFWVIL). Residues 566–663 (RQKWHKLCNW…IDSDEDVERF (98 aa)) are Cytoplasmic-facing.

The protein belongs to the amiloride-sensitive sodium channel (TC 1.A.6) family. SCNN1G subfamily. In terms of assembly, component of the heterotrimeric epithelial sodium channel (ENaC) composed of an alpha/SCNN1A, a beta/SCNN1B and a gamma/SCNN1G subunit.

It is found in the apical cell membrane. It carries out the reaction Na(+)(in) = Na(+)(out). Originally identified and characterized by its inhibition by the diuretic drug amiloride. This is one of the three pore-forming subunits of the heterotrimeric epithelial sodium channel (ENaC), a critical regulator of sodium balance and fluid homeostasis. ENaC operates in epithelial tissues, where it mediates the electrodiffusion of sodium ions from extracellular fluid through the apical membrane of cells, with water following osmotically. The sequence is that of Epithelial sodium channel subunit gamma-2 (scnn1g-b) from Xenopus laevis (African clawed frog).